We begin with the raw amino-acid sequence, 353 residues long: Fasciculation and elongation protein zeta-2 (353 aa).

The segment at 19–49 (SLLDQENCNASPEPGAEAGAEAGGGADGFPA) is disordered. Over residues 28–38 (ASPEPGAEAGA) the composition is skewed to low complexity. A phosphoserine mark is found at Ser135, Ser176, and Ser195. Positions 214 to 286 (KRLSVSELNE…AKKKKKLKNG (73 aa)) form a coiled coil. Positions 271–300 (KEHKETAKKKKKLKNGSSQNGKNERSHMPG) are disordered.

This sequence belongs to the zygin family. In terms of assembly, homodimer; disulfide-linked. May form heterodimers with FEZ1. Interacts with synaptotagmin. As to expression, expressed in nonneural tissues, such as heart, lung, spleen, muscle, testis, placenta and melanocytes.

Functionally, involved in axonal outgrowth and fasciculation. The sequence is that of Fasciculation and elongation protein zeta-2 (FEZ2) from Homo sapiens (Human).